The sequence spans 581 residues: MESLLCRRRIKRVMVLIIALTWLRSTCGELEDQLFEVGKLKMFVDDLPDMPRLYGFNSVHGIIKPASLQIGMFSTKWKFHRDLPATPVFAYGTSRSKATVPGPTIETVYGVDTYVTWRNHLPKSHILPWDPTISPATPKHGGIPTVVHLHGGIHEPTSDGNADAWFTAGFRETGPKWTKTTLHYENKQQPGNMWYHDHAMGLTRVNLLAGLVGAYILRHHAVESPFQLPTGDEFDRPLIIFDRSFRKDGSIYMNATGNNPSIHPQWQPEYFGDVIIVNGKAWPRLNVRRRKYRFRIINASNARFFKFFFSNGLDFIVVGSDSAYLSKPVMTKSILLSPSEIVDVVVDFYKSPSRTVVLANDAPYPYPSGDPVNEENGKVMKFIINNESEDDTCTIPKKLINYPNADVSNAVLTRYISMYEYVSNSDEPTHLLVNGLPYEAPVTETPKSGTTEVWEVINLTEDNHPLHIHLGLFKVVEQTALLAAGLEEFKECMTKQNDAVKCQISKYARGKKTAVTAHERGWKNVFKMMPGHVTRILVRFSYIHTNASYPFDPTQEPGYVYHCHILDHEDNMMMRPLKVII.

Positions 1-28 (MESLLCRRRIKRVMVLIIALTWLRSTCG) are cleaved as a signal peptide. Cu cation contacts are provided by histidine 148, histidine 150, histidine 196, and histidine 198. N-linked (GlcNAc...) asparagine glycosylation is found at asparagine 254, asparagine 298, asparagine 386, and asparagine 458. One can recognise a Plastocyanin-like domain in the interval 283-352 (PRLNVRRRKY…DVVVDFYKSP (70 aa)). Cu cation is bound by residues histidine 464, histidine 467, and histidine 469. An N-linked (GlcNAc...) asparagine glycan is attached at asparagine 546. Cu cation contacts are provided by histidine 562, cysteine 563, histidine 564, histidine 568, and methionine 573.

The protein belongs to the multicopper oxidase family. Cu cation serves as cofactor.

It localises to the endoplasmic reticulum membrane. Functionally, multicopper oxidase that may be involved in copper homeostasis and oxidative stress response, and that is necessary for root growth inhibition by low phosphate conditions. Functions together with LPR2 and PDR2 in a common pathway that adjusts root meristem activity to phosphate availability. Oxidizes the substrate 2,2'-azinobis-(3-ethylbenzthiazoline-6-sulphonate) in vitro. The sequence is that of Multicopper oxidase LPR1 (LPR1) from Arabidopsis thaliana (Mouse-ear cress).